The following is a 172-amino-acid chain: Probable tryptophan transport protein (172 aa).

4 helical membrane-spanning segments follow: residues 7 to 29 (VIMA…FLGG), 49 to 71 (VQNV…AFPA), 104 to 126 (AVLT…LLIV), and 136 to 158 (FAAV…YPIV).

Belongs to the vitamin uptake transporter (VUT/ECF) (TC 2.A.88) family. TrpP subfamily.

Its subcellular location is the cell membrane. Probably involved in tryptophan uptake. This chain is Probable tryptophan transport protein (trpP), found in Bacillus subtilis (strain 168).